The chain runs to 94 residues: Protein translocase subunit SecE (94 aa).

Residues 1 to 32 (MTDAVGSIDMPDAQDEAPDSKKSRKGGKRGKK) are disordered. Residues 22-32 (KSRKGGKRGKK) are compositionally biased toward basic residues. Residues 65-85 (TVVIIFVVIMIGLVTLIDYGF) traverse the membrane as a helical segment.

It belongs to the SecE/SEC61-gamma family. In terms of assembly, component of the Sec protein translocase complex. Heterotrimer consisting of SecY, SecE and SecG subunits. The heterotrimers can form oligomers, although 1 heterotrimer is thought to be able to translocate proteins. Interacts with the ribosome. Interacts with SecDF, and other proteins may be involved. Interacts with SecA.

The protein localises to the cell membrane. Functionally, essential subunit of the Sec protein translocation channel SecYEG. Clamps together the 2 halves of SecY. May contact the channel plug during translocation. The sequence is that of Protein translocase subunit SecE from Streptomyces coelicolor (strain ATCC BAA-471 / A3(2) / M145).